A 430-amino-acid chain; its full sequence is Inactive metallocarboxypeptidase ECM14 (430 aa).

The N-terminal stretch at 1-24 (MLHMNSLWGCFLFVLLAVTGAVQG) is a signal peptide. The propeptide occupies 25–105 (LQEDYSEYAV…TLPTSQMMAR (81 aa)). N-linked (GlcNAc...) asparagine glycosylation is present at Asn41. The region spanning 120–425 (EYRDLDTIYM…AALKYFCDFL (306 aa)) is the Peptidase M14 domain. Residues His182 and Glu185 each contribute to the Zn(2+) site. Residues 182-185 (HARE), Arg240, and 257-258 (DH) each bind substrate. A disulfide bond links Cys251 and Cys272. N-linked (GlcNAc...) asparagine glycosylation is present at Asn295. A Zn(2+)-binding site is contributed by His310. 311-312 (SY) contacts substrate.

It belongs to the peptidase M14 family. Requires Zn(2+) as cofactor. N-glycosylated.

The protein resides in the vacuole. It localises to the secreted. Inactive carboxypeptidase that may play a role in cell wall organization and biogenesis. In Saccharomyces cerevisiae (strain ATCC 204508 / S288c) (Baker's yeast), this protein is Inactive metallocarboxypeptidase ECM14.